A 436-amino-acid chain; its full sequence is Serine carboxypeptidase-like 15 (436 aa).

Residues 1 to 24 (MASWIFKLLLLLQCVLVLIQHADS) form the signal peptide. 3 cysteine pairs are disulfide-bonded: Cys83-Cys326, Cys247-Cys261, and Cys285-Cys292. An N-linked (GlcNAc...) asparagine glycan is attached at Asn104. Ser179 is an active-site residue. 2 N-linked (GlcNAc...) asparagine glycosylation sites follow: Asn306 and Asn345. Asp361 is a catalytic residue. N-linked (GlcNAc...) asparagine glycosylation is present at Asn377. The active site involves His414.

The protein belongs to the peptidase S10 family. As to expression, expressed in seedlings and roots.

The protein resides in the secreted. Functionally, probable carboxypeptidase. In Arabidopsis thaliana (Mouse-ear cress), this protein is Serine carboxypeptidase-like 15 (SCPL15).